Consider the following 227-residue polypeptide: Cytochrome c oxidase subunit 2 (227 aa).

Over 1–14 the chain is Mitochondrial intermembrane; it reads MAYPFQLGLQDATS. Residues 15–45 traverse the membrane as a helical segment; sequence PIMEELTNFHDHTLMIVFLISSLVLYIISLM. Topologically, residues 46–59 are mitochondrial matrix; sequence LTTKLTHTSTMDAQ. The chain crosses the membrane as a helical span at residues 60–87; the sequence is EVETIWTILPAVILILIALPSLRILYMM. Over 88–227 the chain is Mitochondrial intermembrane; sequence DEINNPVLTV…HFENWSASMI (140 aa). His-161, Cys-196, Glu-198, Cys-200, His-204, and Met-207 together coordinate Cu cation. Glu-198 is a Mg(2+) binding site.

This sequence belongs to the cytochrome c oxidase subunit 2 family. In terms of assembly, component of the cytochrome c oxidase (complex IV, CIV), a multisubunit enzyme composed of 14 subunits. The complex is composed of a catalytic core of 3 subunits MT-CO1, MT-CO2 and MT-CO3, encoded in the mitochondrial DNA, and 11 supernumerary subunits COX4I, COX5A, COX5B, COX6A, COX6B, COX6C, COX7A, COX7B, COX7C, COX8 and NDUFA4, which are encoded in the nuclear genome. The complex exists as a monomer or a dimer and forms supercomplexes (SCs) in the inner mitochondrial membrane with NADH-ubiquinone oxidoreductase (complex I, CI) and ubiquinol-cytochrome c oxidoreductase (cytochrome b-c1 complex, complex III, CIII), resulting in different assemblies (supercomplex SCI(1)III(2)IV(1) and megacomplex MCI(2)III(2)IV(2)). Found in a complex with TMEM177, COA6, COX18, COX20, SCO1 and SCO2. Interacts with TMEM177 in a COX20-dependent manner. Interacts with COX20. Interacts with COX16. Cu cation serves as cofactor.

Its subcellular location is the mitochondrion inner membrane. The enzyme catalyses 4 Fe(II)-[cytochrome c] + O2 + 8 H(+)(in) = 4 Fe(III)-[cytochrome c] + 2 H2O + 4 H(+)(out). Component of the cytochrome c oxidase, the last enzyme in the mitochondrial electron transport chain which drives oxidative phosphorylation. The respiratory chain contains 3 multisubunit complexes succinate dehydrogenase (complex II, CII), ubiquinol-cytochrome c oxidoreductase (cytochrome b-c1 complex, complex III, CIII) and cytochrome c oxidase (complex IV, CIV), that cooperate to transfer electrons derived from NADH and succinate to molecular oxygen, creating an electrochemical gradient over the inner membrane that drives transmembrane transport and the ATP synthase. Cytochrome c oxidase is the component of the respiratory chain that catalyzes the reduction of oxygen to water. Electrons originating from reduced cytochrome c in the intermembrane space (IMS) are transferred via the dinuclear copper A center (CU(A)) of subunit 2 and heme A of subunit 1 to the active site in subunit 1, a binuclear center (BNC) formed by heme A3 and copper B (CU(B)). The BNC reduces molecular oxygen to 2 water molecules using 4 electrons from cytochrome c in the IMS and 4 protons from the mitochondrial matrix. This is Cytochrome c oxidase subunit 2 (MT-CO2) from Batomys granti (Luzon hairy-tailed rat).